The primary structure comprises 92 residues: Ribonuclease P protein component 1 (92 aa).

It belongs to the eukaryotic/archaeal RNase P protein component 1 family. As to quaternary structure, consists of a catalytic RNA component and at least 4-5 protein subunits.

It localises to the cytoplasm. It carries out the reaction Endonucleolytic cleavage of RNA, removing 5'-extranucleotides from tRNA precursor.. Part of ribonuclease P, a protein complex that generates mature tRNA molecules by cleaving their 5'-ends. In Desulfurococcus amylolyticus (strain DSM 18924 / JCM 16383 / VKM B-2413 / 1221n) (Desulfurococcus kamchatkensis), this protein is Ribonuclease P protein component 1.